The primary structure comprises 122 residues: Large ribosomal subunit protein bL12 (122 aa).

This sequence belongs to the bacterial ribosomal protein bL12 family. As to quaternary structure, homodimer. Part of the ribosomal stalk of the 50S ribosomal subunit. Forms a multimeric L10(L12)X complex, where L10 forms an elongated spine to which 2 to 4 L12 dimers bind in a sequential fashion. Binds GTP-bound translation factors.

Functionally, forms part of the ribosomal stalk which helps the ribosome interact with GTP-bound translation factors. Is thus essential for accurate translation. The chain is Large ribosomal subunit protein bL12 from Stenotrophomonas maltophilia (strain R551-3).